Reading from the N-terminus, the 585-residue chain is Arginine--tRNA ligase (585 aa).

A 'HIGH' region motif is present at residues 131-141 (ANPTGPMHVGH).

This sequence belongs to the class-I aminoacyl-tRNA synthetase family. Monomer.

It is found in the cytoplasm. It carries out the reaction tRNA(Arg) + L-arginine + ATP = L-arginyl-tRNA(Arg) + AMP + diphosphate. In Rhizobium etli (strain CIAT 652), this protein is Arginine--tRNA ligase.